The chain runs to 281 residues: Tryptophan synthase alpha chain (281 aa).

Active-site proton acceptor residues include glutamate 49 and aspartate 60.

The protein belongs to the TrpA family. In terms of assembly, tetramer of two alpha and two beta chains.

The catalysed reaction is (1S,2R)-1-C-(indol-3-yl)glycerol 3-phosphate + L-serine = D-glyceraldehyde 3-phosphate + L-tryptophan + H2O. The protein operates within amino-acid biosynthesis; L-tryptophan biosynthesis; L-tryptophan from chorismate: step 5/5. The alpha subunit is responsible for the aldol cleavage of indoleglycerol phosphate to indole and glyceraldehyde 3-phosphate. The polypeptide is Tryptophan synthase alpha chain (Methanocaldococcus jannaschii (strain ATCC 43067 / DSM 2661 / JAL-1 / JCM 10045 / NBRC 100440) (Methanococcus jannaschii)).